We begin with the raw amino-acid sequence, 239 residues long: Probable transcriptional regulatory protein lmo0369 (239 aa).

This sequence belongs to the TACO1 family. YeeN subfamily.

The protein localises to the cytoplasm. The sequence is that of Probable transcriptional regulatory protein lmo0369 from Listeria monocytogenes serovar 1/2a (strain ATCC BAA-679 / EGD-e).